The chain runs to 175 residues: ATP-dependent protease subunit HslV (175 aa).

The active site involves Thr-2. The Na(+) site is built by Gly-158, Cys-161, and Thr-164.

This sequence belongs to the peptidase T1B family. HslV subfamily. As to quaternary structure, a double ring-shaped homohexamer of HslV is capped on each side by a ring-shaped HslU homohexamer. The assembly of the HslU/HslV complex is dependent on binding of ATP.

It is found in the cytoplasm. The enzyme catalyses ATP-dependent cleavage of peptide bonds with broad specificity.. With respect to regulation, allosterically activated by HslU binding. Protease subunit of a proteasome-like degradation complex believed to be a general protein degrading machinery. The polypeptide is ATP-dependent protease subunit HslV (Haemophilus influenzae (strain PittGG)).